We begin with the raw amino-acid sequence, 85 residues long: U4-theraphotoxin-Hhn1a (85 aa).

A signal peptide spans 1–22; that stretch reads MKMTLIAILTCAAVLVLHTTAA. Positions 23–48 are excised as a propeptide; sequence EELEAESQLMEVGMPDTELAAVDEER. 3 disulfides stabilise this stretch: C52-C66, C56-C77, and C71-C82.

It belongs to the neurotoxin 12 (Hwtx-2) family. 02 (Hwtx-2) subfamily. As to quaternary structure, monomer. In terms of tissue distribution, expressed by the venom gland.

The protein localises to the secreted. In terms of biological role, neurotoxin active on both insects and mammals. The protein is U4-theraphotoxin-Hhn1a of Cyriopagopus hainanus (Chinese bird spider).